Here is a 591-residue protein sequence, read N- to C-terminus: V-type ATP synthase alpha chain (591 aa).

ATP is bound at residue 232-239 (GPFGAGKT).

This sequence belongs to the ATPase alpha/beta chains family.

It catalyses the reaction ATP + H2O + 4 H(+)(in) = ADP + phosphate + 5 H(+)(out). In terms of biological role, produces ATP from ADP in the presence of a proton gradient across the membrane. The V-type alpha chain is a catalytic subunit. In Clostridium perfringens (strain ATCC 13124 / DSM 756 / JCM 1290 / NCIMB 6125 / NCTC 8237 / Type A), this protein is V-type ATP synthase alpha chain.